Reading from the N-terminus, the 192-residue chain is 21.7 kDa class VI heat shock protein (192 aa).

The sHSP domain maps to 80 to 192 (SLRSLGQCRV…IPKINSKNKF (113 aa)).

Belongs to the small heat shock protein (HSP20) family. In terms of assembly, may form oligomeric structures.

It is found in the cytoplasm. In Arabidopsis thaliana (Mouse-ear cress), this protein is 21.7 kDa class VI heat shock protein (HSP21.7).